Reading from the N-terminus, the 157-residue chain is ATP synthase subunit b (157 aa).

The helical transmembrane segment at 7–29 (LVSQAIAFSIFIWFTTKFVWPYL) threads the bilayer.

The protein belongs to the ATPase B chain family. As to quaternary structure, F-type ATPases have 2 components, F(1) - the catalytic core - and F(0) - the membrane proton channel. F(1) has five subunits: alpha(3), beta(3), gamma(1), delta(1), epsilon(1). F(0) has three main subunits: a(1), b(2) and c(10-14). The alpha and beta chains form an alternating ring which encloses part of the gamma chain. F(1) is attached to F(0) by a central stalk formed by the gamma and epsilon chains, while a peripheral stalk is formed by the delta and b chains.

It is found in the cell inner membrane. Functionally, f(1)F(0) ATP synthase produces ATP from ADP in the presence of a proton or sodium gradient. F-type ATPases consist of two structural domains, F(1) containing the extramembraneous catalytic core and F(0) containing the membrane proton channel, linked together by a central stalk and a peripheral stalk. During catalysis, ATP synthesis in the catalytic domain of F(1) is coupled via a rotary mechanism of the central stalk subunits to proton translocation. In terms of biological role, component of the F(0) channel, it forms part of the peripheral stalk, linking F(1) to F(0). This chain is ATP synthase subunit b, found in Nitrosomonas eutropha (strain DSM 101675 / C91 / Nm57).